A 217-amino-acid chain; its full sequence is Somatotropin (217 aa).

The N-terminal stretch at 1–26 is a signal peptide; sequence MATGSRTSLLLAFGLLCLPWLQEGSA. His-44 contributes to the Zn(2+) binding site. A disulfide bond links Cys-79 and Cys-191. Residue Ser-132 is modified to Phosphoserine. A Deamidated glutamine; by deterioration modification is found at Gln-163. Residue Ser-176 is modified to Phosphoserine. Asn-178 is subject to Deamidated asparagine; by deterioration. Glu-200 serves as a coordination point for Zn(2+). Cys-208 and Cys-215 are oxidised to a cystine.

The protein belongs to the somatotropin/prolactin family. Monomer, dimer, trimer, tetramer and pentamer, disulfide-linked or non-covalently associated, in homomeric and heteromeric combinations. Can also form a complex either with GHBP or with the alpha2-macroglobulin complex.

The protein resides in the secreted. In terms of biological role, plays an important role in growth control. Its major role in stimulating body growth is to stimulate the liver and other tissues to secrete IGF1. It stimulates both the differentiation and proliferation of myoblasts. It also stimulates amino acid uptake and protein synthesis in muscle and other tissues. The protein is Somatotropin (GH1) of Homo sapiens (Human).